The chain runs to 294 residues: NAD kinase (294 aa).

Asp74 (proton acceptor) is an active-site residue. Residues 74 to 75 (DG), 148 to 149 (NE), His159, Arg176, Asp178, 189 to 194 (TAYSLS), and Gln249 each bind NAD(+).

This sequence belongs to the NAD kinase family. A divalent metal cation is required as a cofactor.

It localises to the cytoplasm. The enzyme catalyses NAD(+) + ATP = ADP + NADP(+) + H(+). Functionally, involved in the regulation of the intracellular balance of NAD and NADP, and is a key enzyme in the biosynthesis of NADP. Catalyzes specifically the phosphorylation on 2'-hydroxyl of the adenosine moiety of NAD to yield NADP. The chain is NAD kinase from Vibrio cholerae serotype O1 (strain ATCC 39541 / Classical Ogawa 395 / O395).